We begin with the raw amino-acid sequence, 263 residues long: Flagellar brake protein YcgR (263 aa).

The segment at 1 to 21 (MAELSTPSPASPAPLDGGRGD) is disordered. The 118-residue stretch at 133-250 (QRREFYRLQV…DTRIQRYIFK (118 aa)) folds into the PilZ domain.

The protein belongs to the YcgR family. As to quaternary structure, monomer. Interacts with the flagellar basal bodies.

It localises to the bacterial flagellum basal body. Functionally, acts as a flagellar brake, regulating swimming and swarming in a bis-(3'-5') cyclic diguanylic acid (c-di-GMP)-dependent manner. Binds 1 c-di-GMP dimer per subunit. Increasing levels of c-di-GMP lead to decreased motility. The polypeptide is Flagellar brake protein YcgR (Thauera aminoaromatica).